Reading from the N-terminus, the 264-residue chain is Phosphoinositide-3-kinase-interacting protein 1 (264 aa).

An N-terminal signal peptide occupies residues 1 to 21 (MLLAWVHTFLLSNMLLAEAYG). Residues 22–170 (SGGCFWDNGH…SKEKKDLGTL (149 aa)) are Extracellular-facing. In terms of domain architecture, Kringle spans 24 to 101 (GCFWDNGHLY…EKRPCEDVSC (78 aa)). Intrachain disulfides connect C25-C101, C46-C82, and C70-C96. The segment at 94–129 (RPCEDVSCPETTSQAPPPSSAMELEEKSGAPGDKEA) is disordered. The segment covering 117–129 (LEEKSGAPGDKEA) has biased composition (basic and acidic residues). The chain crosses the membrane as a helical span at residues 171-191 (GYVLGITMMVIILAIGAGIIV). Residues 192–264 (GYTYKRGKDL…LTGQAGTPGA (73 aa)) lie on the Cytoplasmic side of the membrane.

Its subcellular location is the cell membrane. Its function is as follows. Negative regulator of hepatic phosphatidylinositol 3-kinase (PI3K) activity. In Mus musculus (Mouse), this protein is Phosphoinositide-3-kinase-interacting protein 1 (Pik3ip1).